The chain runs to 149 residues: Transcription factor MafF (149 aa).

Residues 51–76 (RLKQRRRTLKNRGYAASCRVKRVCQK) form a basic motif region. In terms of domain architecture, bZIP spans 51–114 (RLKQRRRTLK…DTLRGKYEAL (64 aa)). Residues 79-93 (LQKQKMELEWEVDKL) form a leucine-zipper region.

Belongs to the bZIP family. Maf subfamily. In terms of assembly, monomer and homo- or heterodimer. As to expression, highly expressed in the ovary, lower expression in the brain, heart and mesenterium.

It is found in the nucleus. Its function is as follows. Since it lacks a putative transactivation domain, it may behave as a transcriptional repressor when it dimerizes among itself. May also serve as a transcriptional activator by dimerizing with other (usually larger) basic-zipper proteins and recruiting them to specific DNA-binding sites. May be involved in the cellular stress response. The sequence is that of Transcription factor MafF (MAFF) from Gallus gallus (Chicken).